We begin with the raw amino-acid sequence, 1071 residues long: SLIT-ROBO Rho GTPase-activating protein 2 (1071 aa).

The region spanning 22–325 (KEIRAQLTEQ…AVENLDATSD (304 aa)) is the F-BAR domain. A compositionally biased stretch (basic and acidic residues) spans 181–203 (LKEAEKQEEKQIGKSVKQEDRQT). The tract at residues 181–211 (LKEAEKQEEKQIGKSVKQEDRQTPRSPDSTA) is disordered. A Phosphoserine modification is found at S206. Positions 362 to 401 (VQSELVQRCQQLQSRLSTLKIENEEVKKTMEATLQTIQDI) form a coiled coil. Phosphoserine occurs at positions 427, 500, 691, and 695. Residues 489 to 679 (ARRSSTVRKQ…TIIIQHENIF (191 aa)) enclose the Rho-GAP domain. The tract at residues 698–726 (DYCDSPHGETTSVEDSTQDVTAEHHTSDD) is disordered. Residues 705–717 (GETTSVEDSTQDV) are compositionally biased toward polar residues. The residue at position 724 (S724) is a Phosphoserine. The region spanning 728 to 787 (CEPIEAIAKFDYVGRTARELSFKKGASLLLYQRASDDWWEGRHNGIDGLIPHQYIVVQDT) is the SH3 domain. S795 bears the Phosphoserine mark. The tract at residues 837–936 (QRKRPESGSI…RSKSFNNHRP (100 aa)) is disordered. Over residues 855–866 (HGLSSSLTDSSS) the composition is skewed to low complexity. 2 stretches are compositionally biased toward polar residues: residues 874 to 885 (RPSSQPIMSQSL) and 897 to 907 (GHGSLNSISRH). Phosphoserine is present on S916. Over residues 919–933 (IRKTATAGRSKSFNN) the composition is skewed to polar residues. R927 carries the symmetric dimethylarginine; by PRMT5 modification. Phosphoserine is present on S930. Residues 940–967 (EVIAQDIEATMNSALNELRELERQSSVK) adopt a coiled-coil conformation. The interval 983-1012 (SPVVAPTSEPSSPLHTQLLKDPEPAFQRSA) is disordered. S990, S994, S1013, and S1027 each carry phosphoserine. The tract at residues 1029–1071 (KMAAPVKPPATRPKPTVFPKTNATSPGVNSSTSPQSTDKSCTV) is disordered. A compositionally biased stretch (polar residues) spans 1047 to 1071 (PKTNATSPGVNSSTSPQSTDKSCTV).

As to quaternary structure, homodimer. Heterodimer; forms a heterodimer with SRGAP2C, altering SRGAP2 function. Forms a heterooligomer with SRGAP1 and SRGAP3 through its F-BAR domain. Interacts (via SH3 domain) with GPHN. Interacts (via SH3 domain) with FMNL1 (activated by RAC1); regulates the actin filament severing activity of FMNL1 and actin dynamics. Interacts (via SH3 domain) with FMNL3. Interacts with RAC1; specifically stimulates RAC1 GTPase activity. Interacts (via F-BAR domain) with HOMER1. Interacts with ROBO1 and ROBO2. Interacts with FASLG. Interacts with PRMT5. In terms of processing, methylation at Arg-927 is required for the stimulation of cell migration, dimerization and localization at the plasma membrane protrusions.

The protein resides in the cell membrane. Its subcellular location is the cell projection. It is found in the dendritic spine. The protein localises to the postsynaptic density. It localises to the postsynaptic cell membrane. The protein resides in the lamellipodium. Its subcellular location is the cytoplasmic vesicle. It is found in the phagosome. The protein localises to the nucleus. It localises to the cytoplasm. The protein resides in the cytosol. With respect to regulation, activity is strongly inhibited by SRGAP2C, which heterodimerize with SRGAP2/SRGAP2A, thereby reducing SRGAP2/SRGAP2A levels through proteasome-dependent degradation. In terms of biological role, postsynaptic RAC1 GTPase activating protein (GAP) that plays a key role in neuronal morphogenesis and migration mainly during development of the cerebral cortex. Regulates excitatory and inhibitory synapse maturation and density in cortical pyramidal neurons. SRGAP2/SRGAP2A limits excitatory and inhibitory synapse density through its RAC1-specific GTPase activating activity, while it promotes maturation of both excitatory and inhibitory synapses through its ability to bind to the postsynaptic scaffolding protein HOMER1 at excitatory synapses, and the postsynaptic protein GPHN at inhibitory synapses. Mechanistically, acts by binding and deforming membranes, thereby regulating actin dynamics to regulate cell migration and differentiation. Promotes cell repulsion and contact inhibition of locomotion: localizes to protrusions with curved edges and controls the duration of RAC1 activity in contact protrusions. In non-neuronal cells, may also play a role in cell migration by regulating the formation of lamellipodia and filopodia. The chain is SLIT-ROBO Rho GTPase-activating protein 2 from Homo sapiens (Human).